A 340-amino-acid chain; its full sequence is MREQLDQIRREAAEALCAVDTMEALQDWRVRILGKKGVLTGILRGLGALPAEERPLMGALVNEVRAELEFKLEEKSRELKAREKEARLSGESIDITLPGRVQPVGGKHPLTLVIDEIKQIFLGMGYEIAEGPEVELDYYNFEALNLPQDHPARDMQDSFYITSDILLRTHTSPVQIRAMERIRPQLPVKVICPGRVFRRDDDATHSPMFHQVEGLVVDKGITFGDLRGTLLTFARQMFGPDREIRLRPSFFPFTEPSAEVDISCVICGGGGCRVCKGSGWLEILGSGMVHPRVLEYGGYNPQEVTGFAFGMGVERIAMLKYGIDDMRLLYENDMRFLAQF.

E255 provides a ligand contact to Mg(2+).

It belongs to the class-II aminoacyl-tRNA synthetase family. Phe-tRNA synthetase alpha subunit type 1 subfamily. As to quaternary structure, tetramer of two alpha and two beta subunits. Requires Mg(2+) as cofactor.

The protein localises to the cytoplasm. The catalysed reaction is tRNA(Phe) + L-phenylalanine + ATP = L-phenylalanyl-tRNA(Phe) + AMP + diphosphate + H(+). This Heliobacterium modesticaldum (strain ATCC 51547 / Ice1) protein is Phenylalanine--tRNA ligase alpha subunit.